The sequence spans 672 residues: 2,4-dienoyl-CoA reductase [(2E)-enoyl-CoA-producing] (672 aa).

Residues 25-27 (SMH), G59, and Q101 each bind FMN. Y167 (proton donor) is an active-site residue. Residue R176 participates in substrate binding. Residue R215 participates in FMN binding. 253–256 (HEAR) lines the substrate pocket. FMN contacts are provided by residues R289 and 311–312 (AR). 2 residues coordinate [4Fe-4S] cluster: C335 and C338. Q340 is a binding site for FAD. Position 340 (Q340) interacts with NADP(+). [4Fe-4S] cluster is bound by residues C342 and C354. FAD is bound by residues A385, D404, Q412, K422, and V449. 563 to 564 (RK) is an NADP(+) binding site. Substrate is bound by residues K567 and W578. Residues G649 and 656–658 (LDA) each bind FAD. Position 654-656 (654-656 (MEL)) interacts with NADP(+).

It in the N-terminal section; belongs to the NADH:flavin oxidoreductase/NADH oxidase family. As to quaternary structure, monomer. FMN is required as a cofactor. FAD serves as cofactor. Requires [4Fe-4S] cluster as cofactor.

The catalysed reaction is a 4,5-saturated-(2E)-enoyl-CoA + NADP(+) = a (2E,4E)-dienoyl-CoA + NADPH + H(+). It catalyses the reaction a (2E,4Z)-dienoyl-CoA + NADPH + H(+) = a 4,5-saturated-(2E)-enoyl-CoA + NADP(+). It carries out the reaction (2E)-decenoyl-CoA + NADP(+) = (2E,4E)-decadienoyl-CoA + NADPH + H(+). The enzyme catalyses (2E)-decenoyl-CoA + NADP(+) = (2E,4Z)-decadienoyl-CoA + NADPH + H(+). The protein operates within lipid metabolism; fatty acid beta-oxidation. Its activity is regulated as follows. Is non-competitively inhibited by NADH. In terms of biological role, functions as an auxiliary enzyme in the beta-oxidation of unsaturated fatty acids with double bonds at even carbon positions. Catalyzes the NADPH-dependent reduction of the C4-C5 double bond of the acyl chain of 2,4-dienoyl-CoA to yield 2-trans-enoyl-CoA. Acts on both isomers, 2-trans,4-cis- and 2-trans,4-trans-decadienoyl-CoA, with almost equal efficiency. Is not active with NADH instead of NADPH. Does not show cis-&gt;trans isomerase activity. This is 2,4-dienoyl-CoA reductase [(2E)-enoyl-CoA-producing] from Escherichia coli (strain K12).